The sequence spans 154 residues: Cyanate hydratase (154 aa).

Catalysis depends on residues arginine 100, glutamate 103, and serine 126.

Belongs to the cyanase family.

The catalysed reaction is cyanate + hydrogencarbonate + 3 H(+) = NH4(+) + 2 CO2. In terms of biological role, catalyzes the reaction of cyanate with bicarbonate to produce ammonia and carbon dioxide. This is Cyanate hydratase from Aspergillus terreus (strain NIH 2624 / FGSC A1156).